Consider the following 70-residue polypeptide: Small, acid-soluble spore protein 1 (70 aa).

It belongs to the alpha/beta-type SASP family.

Its function is as follows. SASP are bound to spore DNA. They are double-stranded DNA-binding proteins that cause DNA to change to an a-like conformation. They protect the DNA backbone from chemical and enzymatic cleavage and are thus involved in dormant spore's high resistance to UV light. The sequence is that of Small, acid-soluble spore protein 1 (sasP-1) from Bacillus cereus.